We begin with the raw amino-acid sequence, 374 residues long: Guanine nucleotide-binding protein subunit alpha-15 (374 aa).

In terms of domain architecture, G-alpha spans 41–374 (GELKLLLLGT…ARYLDEINLL (334 aa)). Residues 44–57 (KLLLLGTGESGKST) form a G1 motif region. GTP contacts are provided by residues 49 to 56 (GTGESGKS), 183 to 189 (LRSRMPT), 208 to 212 (DVGGQ), 277 to 280 (NKTD), and A346. S56 and T189 together coordinate Mg(2+). A G2 motif region spans residues 181-189 (DVLRSRMPT). The tract at residues 204-213 (LRIVDVGGQK) is G3 motif. A G4 motif region spans residues 273-280 (ILFLNKTD). The tract at residues 344–349 (TCATDT) is G5 motif.

This sequence belongs to the G-alpha family. G(q) subfamily. G proteins are composed of 3 units; alpha, beta and gamma. The alpha chain contains the guanine nucleotide binding site.

Its function is as follows. Guanine nucleotide-binding proteins (G proteins) are involved as modulators or transducers in various transmembrane signaling systems. In Oryctolagus cuniculus (Rabbit), this protein is Guanine nucleotide-binding protein subunit alpha-15 (GNA15).